A 179-amino-acid chain; its full sequence is MSKKEEKQEELQEEMEAVDAAGVSEVEVEATEIENLKAELSEMEDKFLRARAEIANMSNRNKNERELLVRYRSQDLGKKILPSIDNLERAMAIEVSDEQGESLKKGISMVLESITVALKEEGIEEIPAMGETFDPNLHQAVQTVPASEETPADTIVEVLQKGYKLQDRVLRPSMVIVAQ.

Basic and acidic residues predominate over residues 1-10; the sequence is MSKKEEKQEE. The disordered stretch occupies residues 1–23; that stretch reads MSKKEEKQEELQEEMEAVDAAGV.

Belongs to the GrpE family. As to quaternary structure, homodimer.

It localises to the cytoplasm. Participates actively in the response to hyperosmotic and heat shock by preventing the aggregation of stress-denatured proteins, in association with DnaK and GrpE. It is the nucleotide exchange factor for DnaK and may function as a thermosensor. Unfolded proteins bind initially to DnaJ; upon interaction with the DnaJ-bound protein, DnaK hydrolyzes its bound ATP, resulting in the formation of a stable complex. GrpE releases ADP from DnaK; ATP binding to DnaK triggers the release of the substrate protein, thus completing the reaction cycle. Several rounds of ATP-dependent interactions between DnaJ, DnaK and GrpE are required for fully efficient folding. In Enterococcus faecalis (strain ATCC 700802 / V583), this protein is Protein GrpE.